Here is a 373-residue protein sequence, read N- to C-terminus: Putative C-P lyase subunit protein HtxH (373 aa).

Belongs to the PhnI family.

In terms of biological role, belongs to an operon involved in hypophosphite oxidation. Exact function not known. The chain is Putative C-P lyase subunit protein HtxH (htxH) from Stutzerimonas stutzeri (Pseudomonas stutzeri).